The following is a 138-amino-acid chain: MALLPDKEKLLRNFLRCANWEEKYLYIIELGQRLPELRDEDKSPQNSIQGCQSQVWIVMRQNAQGIIELHGDSDAAIVKGLIAVVFILYDQMTPQDIVNFDVRPWFEKMALTQHLTPSRSQGLEAMIRAIRAKAAALS.

Cys-51 functions as the Cysteine persulfide intermediate in the catalytic mechanism.

The protein belongs to the SufE family. As to quaternary structure, homodimer. Interacts with SufS.

It localises to the cytoplasm. It functions in the pathway cofactor biosynthesis; iron-sulfur cluster biosynthesis. Functionally, participates in cysteine desulfuration mediated by SufS. Cysteine desulfuration mobilizes sulfur from L-cysteine to yield L-alanine and constitutes an essential step in sulfur metabolism for biosynthesis of a variety of sulfur-containing biomolecules. Functions as a sulfur acceptor for SufS, by mediating the direct transfer of the sulfur atom from the S-sulfanylcysteine of SufS, an intermediate product of cysteine desulfuration process. In Escherichia coli O45:K1 (strain S88 / ExPEC), this protein is Cysteine desulfuration protein SufE.